A 161-amino-acid chain; its full sequence is S-ribosylhomocysteine lyase (161 aa).

H57, H61, and C124 together coordinate Fe cation.

Belongs to the LuxS family. Homodimer. It depends on Fe cation as a cofactor.

The catalysed reaction is S-(5-deoxy-D-ribos-5-yl)-L-homocysteine = (S)-4,5-dihydroxypentane-2,3-dione + L-homocysteine. Its function is as follows. Involved in the synthesis of autoinducer 2 (AI-2) which is secreted by bacteria and is used to communicate both the cell density and the metabolic potential of the environment. The regulation of gene expression in response to changes in cell density is called quorum sensing. Catalyzes the transformation of S-ribosylhomocysteine (RHC) to homocysteine (HC) and 4,5-dihydroxy-2,3-pentadione (DPD). The protein is S-ribosylhomocysteine lyase of Macrococcus caseolyticus (strain JCSC5402) (Macrococcoides caseolyticum).